The sequence spans 455 residues: Bifunctional protein GlmU (455 aa).

The pyrophosphorylase stretch occupies residues M1–R226. UDP-N-acetyl-alpha-D-glucosamine is bound by residues L8–G11, K22, Q73, G78–T79, Y99–D101, G136, E151, N166, and N224. D101 is a Mg(2+) binding site. Residue N224 coordinates Mg(2+). Residues K227–A247 are linker. The tract at residues G248–D455 is N-acetyltransferase. UDP-N-acetyl-alpha-D-glucosamine contacts are provided by R330 and K348. Catalysis depends on H360, which acts as the Proton acceptor. 2 residues coordinate UDP-N-acetyl-alpha-D-glucosamine: Y363 and N374. Acetyl-CoA contacts are provided by residues A377, N383 to Y384, S402, A420, and R437.

In the N-terminal section; belongs to the N-acetylglucosamine-1-phosphate uridyltransferase family. It in the C-terminal section; belongs to the transferase hexapeptide repeat family. In terms of assembly, homotrimer. The cofactor is Mg(2+).

Its subcellular location is the cytoplasm. It catalyses the reaction alpha-D-glucosamine 1-phosphate + acetyl-CoA = N-acetyl-alpha-D-glucosamine 1-phosphate + CoA + H(+). It carries out the reaction N-acetyl-alpha-D-glucosamine 1-phosphate + UTP + H(+) = UDP-N-acetyl-alpha-D-glucosamine + diphosphate. Its pathway is nucleotide-sugar biosynthesis; UDP-N-acetyl-alpha-D-glucosamine biosynthesis; N-acetyl-alpha-D-glucosamine 1-phosphate from alpha-D-glucosamine 6-phosphate (route II): step 2/2. It participates in nucleotide-sugar biosynthesis; UDP-N-acetyl-alpha-D-glucosamine biosynthesis; UDP-N-acetyl-alpha-D-glucosamine from N-acetyl-alpha-D-glucosamine 1-phosphate: step 1/1. It functions in the pathway bacterial outer membrane biogenesis; LPS lipid A biosynthesis. In terms of biological role, catalyzes the last two sequential reactions in the de novo biosynthetic pathway for UDP-N-acetylglucosamine (UDP-GlcNAc). The C-terminal domain catalyzes the transfer of acetyl group from acetyl coenzyme A to glucosamine-1-phosphate (GlcN-1-P) to produce N-acetylglucosamine-1-phosphate (GlcNAc-1-P), which is converted into UDP-GlcNAc by the transfer of uridine 5-monophosphate (from uridine 5-triphosphate), a reaction catalyzed by the N-terminal domain. The protein is Bifunctional protein GlmU of Pseudomonas syringae pv. syringae (strain B728a).